The chain runs to 39 residues: Photosystem II reaction center protein L (39 aa).

A helical membrane pass occupies residues 18 to 38; it reads SLYLGLLLVFVTAVLFTSYFF.

Belongs to the PsbL family. In terms of assembly, PSII is composed of 1 copy each of membrane proteins PsbA, PsbB, PsbC, PsbD, PsbE, PsbF, PsbH, PsbI, PsbJ, PsbK, PsbL, PsbM, PsbT, PsbX, PsbY, Psb30/Ycf12, peripheral proteins PsbO, CyanoQ (PsbQ), PsbU, PsbV and a large number of cofactors. It forms dimeric complexes.

It is found in the cellular thylakoid membrane. In terms of biological role, one of the components of the core complex of photosystem II (PSII). PSII is a light-driven water:plastoquinone oxidoreductase that uses light energy to abstract electrons from H(2)O, generating O(2) and a proton gradient subsequently used for ATP formation. It consists of a core antenna complex that captures photons, and an electron transfer chain that converts photonic excitation into a charge separation. This subunit is found at the monomer-monomer interface and is required for correct PSII assembly and/or dimerization. The protein is Photosystem II reaction center protein L of Prochlorococcus marinus (strain MIT 9313).